The sequence spans 1896 residues: Trinucleotide repeat-containing gene 6A protein (1896 aa).

Basic and acidic residues-rich tracts occupy residues 1–21 and 39–57; these read MRELEAKATKDVERNLSRDLV and KKKEAAQKKATEQKIKVPE. Disordered regions lie at residues 1 to 137, 159 to 209, 222 to 250, and 257 to 276; these read MREL…LLKR, SESS…DCST, EAWPSAPGSDPELAPECIDADSASNSESE, and ASGNTGGEKDGLRNSTGLGS. Residues 1-917 form an interaction with argonaute family proteins region; the sequence is MRELEAKATK…GDPPKCNQSL (917 aa). Low complexity-rich tracts occupy residues 69 to 93 and 101 to 113; these read ANSDNGTSTATSTNNNAKRATASNQ and QQPQQEQQQQQPQ. Residues 125–137 are compositionally biased toward basic residues; that stretch reads RFRHQEHKQLLKR. The interval 239–488 is sufficient for interaction with AGO1, AGO3 and AGO4; that stretch reads IDADSASNSE…QAPSVMNGTS (250 aa). 5 sufficient for interaction with AGO2 regions span residues 255 to 331, 303 to 384, 325 to 424, 394 to 480, and 487 to 736; these read VMAS…NAWG, GALI…STIG, NRMN…KVSF, SKVS…QIQA, and TSLS…NGTE. 2 stretches are compositionally biased toward polar residues: residues 396 to 410 and 417 to 429; these read VSGSSTHGTWGSLQE and SGTQKVSFSGQPQ. Disordered stretches follow at residues 396-461, 548-683, 703-998, 1011-1126, and 1143-1182; these read VSGS…NELP, FQVN…RRKI, LSNS…DPSK, IPEA…PTGW, and QELNSSLNWPPYTKKMSSKGLSGKKRRRERGMMKGGNKQE. Positions 430 to 443 are enriched in low complexity; the sequence is NITTETTGPNNTTN. Residues 444–461 show a composition bias toward polar residues; sequence FMTSSLPNSGSVQNNELP. A sufficient for interaction with AGO1 and AGO4 region spans residues 551 to 1279; the sequence is NTNKGGGVWE…MFGVGNTAAQ (729 aa). A compositionally biased stretch (gly residues) spans 573–584; that stretch reads SGNGANSGGSRR. 2 stretches are compositionally biased toward polar residues: residues 591 to 617 and 635 to 647; these read QNTGTGLSSVEWNKLPSNQHSNDSANG and GSATSQTNEQNSV. A compositionally biased stretch (basic and acidic residues) spans 665–683; the sequence is GRLEEKVTGESQSRDRRKI. Over residues 703–722 the composition is skewed to polar residues; the sequence is LSNSGWGQTPIKQNTAWDTE. The segment covering 723–733 has biased composition (basic and acidic residues); that stretch reads TSPRGERKTDN. Serine 724 is modified (phosphoserine). Positions 738–766 are enriched in polar residues; it reads WGSSATQTFNSGACTDKTSPNSNDTSSVS. Positions 858-871 are enriched in low complexity; that stretch reads SSSGGSDSDRSISG. Residue serine 863 is modified to Phosphoserine. Polar residues-rich tracts occupy residues 876–906 and 924–937; these read GKTSSFTWGNNINPNNSSGWDESSKPNSSQG and KPVSSPDWNKQQDI. Serine 976 is modified (phosphoserine). Polar residues-rich tracts occupy residues 1033-1042, 1054-1064, and 1082-1105; these read AVSSKETSSG, TPATTVDNGTS, and AASNASTWGSSSVGPQSLSKSGPK. Residues 1059–1129 form a sufficient for interaction with AGO2 region; it reads VDNGTSAWGK…GSRPTGWEEE (71 aa). Positions 1143–1163 are enriched in low complexity; it reads QELNSSLNWPPYTKKMSSKGL. Phosphoserine is present on residues serine 1197 and serine 1255. 3 disordered regions span residues 1234 to 1256, 1273 to 1306, and 1360 to 1395; these read GDYNRTVGKGPGSRPQISKESSM, VGNTAAQPRGMQQPPAQPLSSSQPNLRAQVPPPL, and QRAQSQRSAPSANRQQQDQQGRPLSVQQQMMQQSRQ. Composition is skewed to low complexity over residues 1284-1296 and 1360-1376; these read QQPPAQPLSSSQP and QRAQSQRSAPSANRQQQ. At threonine 1406 the chain carries Phosphothreonine. Disordered stretches follow at residues 1512 to 1570 and 1659 to 1685; these read MNSS…VTPG and PKNITAPSRPPPGLTGQKPPLSTWDNS. Residue serine 1520 is modified to Phosphoserine. Residues 1605-1896 form a sufficient for interaction with AGO2 region; sequence TSAWSSIRAS…DHLGGGGESM (292 aa). In terms of domain architecture, RRM spans 1716–1788; that stretch reads NWLVLKNLTP…TTILAEFASE (73 aa). Phosphoserine occurs at positions 1804 and 1825.

This sequence belongs to the GW182 family. In terms of assembly, interacts with AGO2. Interacts with AGO1, AGO3 and AGO4. Interacts with CNOT1; the interaction is direct and mediates the association with the CCR4-NOT complex. Interacts with ZC3H12A. Interacts with SND1. Interacts with GARRE1.

Its subcellular location is the cytoplasm. It localises to the P-body. In terms of biological role, plays a role in RNA-mediated gene silencing by both micro-RNAs (miRNAs) and short interfering RNAs (siRNAs). Required for miRNA-dependent repression of translation and for siRNA-dependent endonucleolytic cleavage of complementary mRNAs by argonaute family proteins. As a scaffolding protein, associates with argonaute proteins bound to partially complementary mRNAs, and can simultaneously recruit CCR4-NOT and PAN deadenylase complexes. This Mus musculus (Mouse) protein is Trinucleotide repeat-containing gene 6A protein (Tnrc6a).